A 226-amino-acid chain; its full sequence is 26S proteasome non-ATPase regulatory subunit 10 (226 aa).

Residues 1–37 (MEGCVSNLMVCNLAYSGKLEELKESILADKSLATRTD) form a required for nuclear localization region. Positions 1–71 (MEGCVSNLMV…LGVPVNDKDD (71 aa)) are interaction with RB1. 7 ANK repeats span residues 3–36 (GCVS…ATRT), 37–69 (DQDS…VNDK), 70–102 (DDAG…VNAV), 103–135 (NQNG…PDAK), 136–168 (DHYE…TNIQ), 169–201 (DTEG…IYIE), and 202–226 (NKEE…MVEG). An interaction with RELA region spans residues 39–226 (DSRTALHWAC…GLILKRMVEG (188 aa)). The interval 171–226 (EGNTPLHLACDEERVEEAKLLVSQGASIYIENKEEKTPLQVAKGGLGLILKRMVEG) is interaction with RB1.

As to quaternary structure, part of transient complex containing PSMD10, PSMC4, PSMC5 and PAAF1 formed during the assembly of the 26S proteasome. Stays associated throughout the assembly of the PA700/19S RC and is released upon association with the 20S core. Interacts with PSMC4. Interacts with RB1. Interacts with CDK4. Interacts with MDM2. Interacts with RELA. Associates with a CDK4:CCND2 serine/threonine kinase complex. Interacts with ARHGDIA and increases the interaction between ARHGDIA and RHOA, hence promotes ARHGDIA inactivation of RHOA and ROCK. In terms of tissue distribution, tends to be up-regulated in cancer cells with RAS mutations, including lung cancers and adenocarconimas (at protein level).

The protein localises to the cytoplasm. It localises to the nucleus. Acts as a chaperone during the assembly of the 26S proteasome, specifically of the PA700/19S regulatory complex (RC). In the initial step of the base subcomplex assembly is part of an intermediate PSMD10:PSMC4:PSMC5:PAAF1 module which probably assembles with a PSMD5:PSMC2:PSMC1:PSMD2 module. Independently of the proteasome, regulates EGF-induced AKT activation through inhibition of the RHOA/ROCK/PTEN pathway, leading to prolonged AKT activation. Plays an important role in RAS-induced tumorigenesis. In terms of biological role, acts as an proto-oncoprotein by being involved in negative regulation of tumor suppressors RB1 and p53/TP53. Overexpression is leading to phosphorylation of RB1 and proteasomal degradation of RB1. Regulates CDK4-mediated phosphorylation of RB1 by competing with CDKN2A for binding with CDK4. Facilitates binding of MDM2 to p53/TP53 and the mono- and polyubiquitination of p53/TP53 by MDM2 suggesting a function in targeting the TP53:MDM2 complex to the 26S proteasome. Involved in p53-independent apoptosis. Involved in regulation of NF-kappa-B by retaining it in the cytoplasm. Binds to the NF-kappa-B component RELA and accelerates its XPO1/CRM1-mediated nuclear export. This is 26S proteasome non-ATPase regulatory subunit 10 (PSMD10) from Homo sapiens (Human).